The following is a 151-amino-acid chain: NADPH-dependent 7-cyano-7-deazaguanine reductase (151 aa).

Residue cysteine 49 is the Thioimide intermediate of the active site. Aspartate 56 acts as the Proton donor in catalysis. Substrate contacts are provided by residues 71–73 (IES) and 90–91 (HE).

This sequence belongs to the GTP cyclohydrolase I family. QueF type 1 subfamily.

The protein localises to the cytoplasm. The enzyme catalyses 7-aminomethyl-7-carbaguanine + 2 NADP(+) = 7-cyano-7-deazaguanine + 2 NADPH + 3 H(+). Its pathway is tRNA modification; tRNA-queuosine biosynthesis. Functionally, catalyzes the NADPH-dependent reduction of 7-cyano-7-deazaguanine (preQ0) to 7-aminomethyl-7-deazaguanine (preQ1). In Caulobacter vibrioides (strain ATCC 19089 / CIP 103742 / CB 15) (Caulobacter crescentus), this protein is NADPH-dependent 7-cyano-7-deazaguanine reductase.